The sequence spans 84 residues: Delta-stichotoxin-Shd3a (84 aa).

A signal peptide spans 1–19 (MAYLKIVLVALMLVLGVSA). Positions 20-33 (MRLSDQEDQDVSVV) are excised as a propeptide. Cystine bridges form between Cys-38–Cys-78, Cys-40–Cys-68, and Cys-61–Cys-79. The residue at position 83 (Lys-83) is a Lysine amide.

Belongs to the sea anemone sodium channel inhibitory toxin family. Type II subfamily.

Its subcellular location is the secreted. The protein resides in the nematocyst. Its function is as follows. Binds specifically to voltage-gated sodium channels (Nav), thereby delaying their inactivation during signal transduction. This Stichodactyla haddoni (Saddle carpet anemone) protein is Delta-stichotoxin-Shd3a.